The sequence spans 98 residues: Large ribosomal subunit protein uL23 (98 aa).

It belongs to the universal ribosomal protein uL23 family. As to quaternary structure, part of the 50S ribosomal subunit. Contacts protein L29, and trigger factor when it is bound to the ribosome.

One of the early assembly proteins it binds 23S rRNA. One of the proteins that surrounds the polypeptide exit tunnel on the outside of the ribosome. Forms the main docking site for trigger factor binding to the ribosome. The protein is Large ribosomal subunit protein uL23 of Streptococcus gordonii (strain Challis / ATCC 35105 / BCRC 15272 / CH1 / DL1 / V288).